The chain runs to 581 residues: MNYRRNICLRIGWMLLFAFIPAYAGHSAEEWKRRSIYQIITDRFSLEEGATERIPCDPVRFMYCGGTWNGIRNHLDYIQGMGFDAIWISPIFENVEGNDIDGSSYHGYWTTNLYELNHHFGTKEEFMELIQELHKRDIWILLDVAINSMAINGPLEQMSFEKVIPFNDASFFHPHCWVDYESNDIESVQNCWLGDENLLLADVDTENEVVLSVLEKWIKNVVQEYDIDGIRFDAIKHAPIEFWLRMSKAADIFTIGEYFTGSPAEACDYQNSGLDSFLNFPLYWPITWAFNNTGLQCEALAIAINQINEECNDINVLGTFIGNHDLPRISHNNTDQARIMNAITFVMMWDGIPIIYYGTEQNFNSYHDPFNREALWLSNFDMENVYYKLIGILNRFRKSVQRQEENYVNTRSTILSVKIHHIVVQKLNVITVLNNYGIHNEERLSIVFKPLGASPKDTFFDIINNQKYVVNTDGTLKVVITNGFPIVLYPTSKIETSLPQFTATLLPEITFVPSITVTTHYVLPTLLAPLGYDIREHPGGQQFWNTLTAKSEAKTIRSFTKLKLFILLIAVPFALPMIILI.

The first 24 residues, methionine 1–alanine 24, serve as a signal peptide directing secretion. Cysteine 56 and cysteine 64 are oxidised to a cystine. Tryptophan 109 contacts substrate. Position 147 (asparagine 147) interacts with Ca(2+). A disulfide bond links cysteine 176 and cysteine 191. Ca(2+) is bound at residue aspartate 202. Arginine 231 is a substrate binding site. Ca(2+)-binding residues include aspartate 233, histidine 237, and glutamate 257. The Nucleophile role is filled by aspartate 233. A substrate-binding site is contributed by lysine 236–histidine 237. Residue glutamate 257 is the Proton donor of the active site. A substrate-binding site is contributed by glycine 261. An intrachain disulfide couples cysteine 267 to cysteine 311. Asparagine 291 is a glycosylation site (N-linked (GlcNAc...) asparagine). Aspartate 325 provides a ligand contact to substrate. Residue asparagine 332 is glycosylated (N-linked (GlcNAc...) asparagine). Arginine 372 contacts substrate. A lipid anchor (GPI-anchor amidated serine) is attached at serine 551. The propeptide at glutamate 552–isoleucine 581 is removed in mature form.

Belongs to the glycosyl hydrolase 13 family. Ca(2+) serves as cofactor.

Its subcellular location is the cell membrane. The enzyme catalyses Endohydrolysis of (1-&gt;4)-alpha-D-glucosidic linkages in polysaccharides containing three or more (1-&gt;4)-alpha-linked D-glucose units.. The chain is Alpha-amylase 2 (aah2) from Schizosaccharomyces pombe (strain 972 / ATCC 24843) (Fission yeast).